The sequence spans 134 residues: Fluoride-specific ion channel FluC (134 aa).

Helical transmembrane passes span 7 to 27, 38 to 58, 69 to 89, and 110 to 130; these read LAVA…TIMA, GTLL…IVLV, LFLF…AAES, and VGSL…LLGH. Residues G77 and T80 each coordinate Na(+).

The protein belongs to the fluoride channel Fluc/FEX (TC 1.A.43) family.

The protein localises to the cell inner membrane. The enzyme catalyses fluoride(in) = fluoride(out). With respect to regulation, na(+) is not transported, but it plays an essential structural role and its presence is essential for fluoride channel function. Fluoride-specific ion channel. Important for reducing fluoride concentration in the cell, thus reducing its toxicity. This Legionella pneumophila (strain Paris) protein is Fluoride-specific ion channel FluC.